The chain runs to 247 residues: 2,5-diamino-6-ribosylamino-4(3H)-pyrimidinone 5'-phosphate reductase (247 aa).

Residues Thr-75, Asp-79, Gly-165, and 187-191 each bind NADP(+); that span reads GASII.

This sequence belongs to the HTP reductase family. Homodimer.

It catalyses the reaction 2,5-diamino-6-(1-D-ribitylamino)pyrimidin-4(3H)-one 5'-phosphate + NADP(+) = 2,5-diamino-6-(1-D-ribosylamino)pyrimidin-4(3H)-one 5'-phosphate + NADPH + H(+). It carries out the reaction 2,5-diamino-6-(1-D-ribitylamino)pyrimidin-4(3H)-one 5'-phosphate + NAD(+) = 2,5-diamino-6-(1-D-ribosylamino)pyrimidin-4(3H)-one 5'-phosphate + NADH + H(+). Its pathway is cofactor biosynthesis; riboflavin biosynthesis. In terms of biological role, catalyzes an early step in riboflavin biosynthesis, the NADPH-dependent reduction of the ribose side chain of 2,5-diamino-6-ribosylamino-4(3H)-pyrimidinone 5'-phosphate, yielding 2,5-diamino-6-ribitylamino-4(3H)-pyrimidinone 5'-phosphate. The polypeptide is 2,5-diamino-6-ribosylamino-4(3H)-pyrimidinone 5'-phosphate reductase (RIB7) (Debaryomyces hansenii (strain ATCC 36239 / CBS 767 / BCRC 21394 / JCM 1990 / NBRC 0083 / IGC 2968) (Yeast)).